We begin with the raw amino-acid sequence, 432 residues long: Trigger factor (432 aa).

A PPIase FKBP-type domain is found at 161–246 (EDRVTIDFTG…LKKVEERELP (86 aa)).

It belongs to the FKBP-type PPIase family. Tig subfamily. In terms of assembly, homodimer and monomer. In vivo most of the ribosomes are in complex with monomeric TF. Uncomplexed TF, however, is in a monomer-dimer equilibrium with approximately two thirds of TF existing in a dimeric state.

The protein resides in the cytoplasm. The catalysed reaction is [protein]-peptidylproline (omega=180) = [protein]-peptidylproline (omega=0). Its function is as follows. Involved in protein export. Acts as a chaperone by maintaining the newly synthesized protein in an open conformation. Functions as a peptidyl-prolyl cis-trans isomerase. In Shigella dysenteriae serotype 1 (strain Sd197), this protein is Trigger factor.